A 62-amino-acid chain; its full sequence is Phylloseptin-Az7 (62 aa).

The N-terminal stretch at 1–19 is a signal peptide; sequence LKKSLFLVLFLGLVSLSIC. A propeptide spanning residues 20-40 is cleaved from the precursor; that stretch reads EEEKRETEEKENEQEDDKSEE. Position 61 is a phenylalanine amide (F61).

This sequence belongs to the frog skin active peptide (FSAP) family. Phylloseptin subfamily. As to expression, expressed by the skin glands.

It is found in the secreted. In terms of biological role, has antimicrobial activity. The protein is Phylloseptin-Az7 (psn15) of Pithecopus azureus (Orange-legged monkey tree frog).